The following is a 359-amino-acid chain: Phosphate acyltransferase (359 aa).

Positions 337–359 are disordered; that stretch reads AAGAAQPAPETEVPGAHPSPHVA.

The protein belongs to the PlsX family. Homodimer. Probably interacts with PlsY.

The protein localises to the cytoplasm. It catalyses the reaction a fatty acyl-[ACP] + phosphate = an acyl phosphate + holo-[ACP]. It participates in lipid metabolism; phospholipid metabolism. Functionally, catalyzes the reversible formation of acyl-phosphate (acyl-PO(4)) from acyl-[acyl-carrier-protein] (acyl-ACP). This enzyme utilizes acyl-ACP as fatty acyl donor, but not acyl-CoA. In Cupriavidus necator (strain ATCC 17699 / DSM 428 / KCTC 22496 / NCIMB 10442 / H16 / Stanier 337) (Ralstonia eutropha), this protein is Phosphate acyltransferase.